Reading from the N-terminus, the 661-residue chain is Sperm transmembrane protein 9 (661 aa).

The N-terminal stretch at 1 to 16 is a signal peptide; the sequence is MNVILVLVVLFFAGDC. Residues 17–618 are Extracellular-facing; the sequence is AKIRKIIDFL…MTNRLMKNYE (602 aa). Positions 52–90 constitute an EGF-like 1 domain; that stretch reads NFNPCLENPKICSNRGKCLHENGNFYCICPVTHYGKTCE. 3 cysteine pairs are disulfide-bonded: cysteine 56/cysteine 69, cysteine 63/cysteine 78, and cysteine 80/cysteine 89. Asparagine 105, asparagine 106, asparagine 134, and asparagine 190 each carry an N-linked (GlcNAc...) asparagine glycan. An EGF-like 2 domain is found at 210–259; the sequence is QISACFDTQCDNGGICEDVVDWKTKTVTATCKCPSAIELIGGTVTGENCE. Intrachain disulfides connect cysteine 214-cysteine 225, cysteine 219-cysteine 240, and cysteine 242-cysteine 258. Residues asparagine 279, asparagine 290, asparagine 316, and asparagine 338 are each glycosylated (N-linked (GlcNAc...) asparagine). Residues 377–379 carry the Cell attachment site motif; that stretch reads RGD. 3 EGF-like domains span residues 377-414, 519-557, and 559-600; these read RGDRWDEKCTDSQHGACVDISGVAHCVCKPDYTGEKCE, HTNPCYQNLCQNSATCHIDPKQRSYDCQCVNGTRGSLCE, and VDDS…LDCN. 9 cysteine pairs are disulfide-bonded: cysteine 385-cysteine 402, cysteine 393-cysteine 404, cysteine 413-cysteine 419, cysteine 523-cysteine 534, cysteine 528-cysteine 545, cysteine 547-cysteine 556, cysteine 563-cysteine 576, cysteine 571-cysteine 588, and cysteine 590-cysteine 599. The N-linked (GlcNAc...) asparagine glycan is linked to asparagine 549. A helical membrane pass occupies residues 619–639; it reads FSLPLVACFVSLAILLPVIVI. Over 640-661 the chain is Cytoplasmic; sequence SRRRQGRVEEAKKTSEVKTENP.

In terms of tissue distribution, expressed in spermatids, during spermogenesis expression is primarily localized to the pseudopod.

The protein localises to the cytoplasm. Its subcellular location is the membrane. Required for fertilization. May be required for cell adhesion and/or function as a signaling molecule. This is Sperm transmembrane protein 9 (spe-9) from Caenorhabditis elegans.